The following is a 99-amino-acid chain: Nucleoid-associated protein SpyM3_1606 (99 aa).

It belongs to the YbaB/EbfC family. Homodimer.

It localises to the cytoplasm. The protein resides in the nucleoid. Binds to DNA and alters its conformation. May be involved in regulation of gene expression, nucleoid organization and DNA protection. The sequence is that of Nucleoid-associated protein SpyM3_1606 from Streptococcus pyogenes serotype M3 (strain ATCC BAA-595 / MGAS315).